Reading from the N-terminus, the 256-residue chain is Protein YIPF7 (256 aa).

Residues Met-1–Asp-125 are Cytoplasmic-facing. Polar residues-rich tracts occupy residues Ile-18–Tyr-31 and Arg-38–Pro-48. Residues Ile-18–Pro-48 are disordered. The chain crosses the membrane as a helical span at residues Leu-126–Val-146. Residue Gln-147 is a topological domain, extracellular. A helical membrane pass occupies residues Phe-148–Leu-168. Topologically, residues Met-169 to Ser-172 are cytoplasmic. The chain crosses the membrane as a helical span at residues Gly-173–Leu-193. The Extracellular segment spans residues Ser-194 to Cys-196. A helical transmembrane segment spans residues Ala-197 to Trp-217. At Cys-218 to Gln-235 the chain is on the cytoplasmic side. Residues Gln-236–Phe-256 form a helical membrane-spanning segment.

The protein belongs to the YIP1 family.

Its subcellular location is the endoplasmic reticulum membrane. It is found in the golgi apparatus. It localises to the cis-Golgi network membrane. The protein resides in the trans-Golgi network membrane. The polypeptide is Protein YIPF7 (YIPF7) (Homo sapiens (Human)).